A 231-amino-acid polypeptide reads, in one-letter code: MIKAIRSAISFLTTLPLGGDVEELRKNLWLFPYAAILIALIVSVPHFIRNFVDIRFLALVLYLGAEGINHVDGLADFGDALFAPKNRKREAIKDLNTGAGGVAVVVVYFLLLYTLLYRSDFWEIALSQVLAKYSMLLLMLLSRPSWDGMGSYFMEKISSKDVFIGAVPVVLLCYKVGIESLAALASGFAVVLLLKAYSEKHFGGVNGDVIGSANCLTFAASLSALTIAGQL.

5 consecutive transmembrane segments (helical) span residues L28–I48, T97–Y117, F121–L141, V162–A182, and V209–G229.

It belongs to the CobS family. The cofactor is Mg(2+).

The protein resides in the cell membrane. The catalysed reaction is alpha-ribazole + adenosylcob(III)inamide-GDP = adenosylcob(III)alamin + GMP + H(+). The enzyme catalyses alpha-ribazole 5'-phosphate + adenosylcob(III)inamide-GDP = adenosylcob(III)alamin 5'-phosphate + GMP + H(+). It functions in the pathway cofactor biosynthesis; adenosylcobalamin biosynthesis; adenosylcobalamin from cob(II)yrinate a,c-diamide: step 7/7. Functionally, joins adenosylcobinamide-GDP and alpha-ribazole to generate adenosylcobalamin (Ado-cobalamin). Also synthesizes adenosylcobalamin 5'-phosphate from adenosylcobinamide-GDP and alpha-ribazole 5'-phosphate. The chain is Adenosylcobinamide-GDP ribazoletransferase (cobS2) from Archaeoglobus fulgidus (strain ATCC 49558 / DSM 4304 / JCM 9628 / NBRC 100126 / VC-16).